A 246-amino-acid polypeptide reads, in one-letter code: Bis(5'-nucleosyl)-tetraphosphatase PrpE [asymmetrical] (246 aa).

Belongs to the PrpE family. Ni(2+) is required as a cofactor.

It catalyses the reaction P(1),P(4)-bis(5'-guanosyl) tetraphosphate + H2O = GMP + GTP + 2 H(+). In terms of biological role, asymmetrically hydrolyzes Ap4p to yield AMP and ATP. The chain is Bis(5'-nucleosyl)-tetraphosphatase PrpE [asymmetrical] from Bacillus cereus (strain ATCC 10987 / NRS 248).